Here is a 361-residue protein sequence, read N- to C-terminus: Phosphoserine aminotransferase (361 aa).

Residue Arg-43 coordinates L-glutamate. Pyridoxal 5'-phosphate-binding positions include 77 to 78 (AS), Trp-103, Thr-153, Asp-173, and Gln-196. At Lys-197 the chain carries N6-(pyridoxal phosphate)lysine. A pyridoxal 5'-phosphate-binding site is contributed by 238–239 (NT).

The protein belongs to the class-V pyridoxal-phosphate-dependent aminotransferase family. SerC subfamily. In terms of assembly, homodimer. Pyridoxal 5'-phosphate is required as a cofactor.

The protein localises to the cytoplasm. The catalysed reaction is O-phospho-L-serine + 2-oxoglutarate = 3-phosphooxypyruvate + L-glutamate. The enzyme catalyses 4-(phosphooxy)-L-threonine + 2-oxoglutarate = (R)-3-hydroxy-2-oxo-4-phosphooxybutanoate + L-glutamate. It participates in amino-acid biosynthesis; L-serine biosynthesis; L-serine from 3-phospho-D-glycerate: step 2/3. The protein operates within cofactor biosynthesis; pyridoxine 5'-phosphate biosynthesis; pyridoxine 5'-phosphate from D-erythrose 4-phosphate: step 3/5. In terms of biological role, catalyzes the reversible conversion of 3-phosphohydroxypyruvate to phosphoserine and of 3-hydroxy-2-oxo-4-phosphonooxybutanoate to phosphohydroxythreonine. The chain is Phosphoserine aminotransferase from Pseudomonas syringae pv. tomato (strain ATCC BAA-871 / DC3000).